A 123-amino-acid polypeptide reads, in one-letter code: Intracellular iron chaperone frataxin (123 aa).

As to quaternary structure, homodimer, upon Fe(2+) binding. Interacts with the SufS/SufU complex. Interacts with CpfC. Fe(2+) serves as cofactor.

Its subcellular location is the cytoplasm. Its function is as follows. Plays an essential role in iron intracellular trafficking to iron cofactor biogenesis systems including iron-sulfur cluster (Fe-S) or heme assembly. Promotes the biosynthesis of iron-sulfur clusters by delivering Fe to the complex composed of the cysteine desulfurase SufS and the zinc-dependent sulfurtransferase SufU. Also plays a critical role in coproporphyrin-dependent heme b biogenesis and thus provides an essential function for the bacterial global metabolism. This chain is Intracellular iron chaperone frataxin (fra), found in Bacillus subtilis (strain 168).